Here is a 220-residue protein sequence, read N- to C-terminus: RNA-free ribonuclease P (220 aa).

Belongs to the HARP family.

It catalyses the reaction Endonucleolytic cleavage of RNA, removing 5'-extranucleotides from tRNA precursor.. Its function is as follows. RNA-free RNase P that catalyzes the removal of the 5'-leader sequence from pre-tRNA to produce the mature 5'-terminus. This chain is RNA-free ribonuclease P, found in Methanothermobacter thermautotrophicus (strain ATCC 29096 / DSM 1053 / JCM 10044 / NBRC 100330 / Delta H) (Methanobacterium thermoautotrophicum).